Here is a 459-residue protein sequence, read N- to C-terminus: Argininosuccinate lyase (459 aa).

It belongs to the lyase 1 family. Argininosuccinate lyase subfamily.

The protein resides in the cytoplasm. It catalyses the reaction 2-(N(omega)-L-arginino)succinate = fumarate + L-arginine. It participates in amino-acid biosynthesis; L-arginine biosynthesis; L-arginine from L-ornithine and carbamoyl phosphate: step 3/3. This is Argininosuccinate lyase from Staphylococcus aureus (strain bovine RF122 / ET3-1).